A 55-amino-acid chain; its full sequence is Sporulation killing factor (55 aa).

Positions 1–29 (MKRNQKEWESVSKKGLMKPGGTSIVKAAG) are excised as a propeptide. Cysteines 30 and 45 form a disulfide. The segment at residues 30–55 (CMGCWASKSIAMTRVCALPHPAMRAI) is a cross-link (cyclopeptide (Cys-Ile)). Positions 33–41 (CWASKSIAM) form a cross-link, 2-(S-cysteinyl)-methionine (Cys-Met).

Post-translationally, this is a cyclic peptide. The first step in SKF maturation is probably thioether bond formation.

It localises to the secreted. Functionally, produces a 26-residue extracellular sporulation killing factor (SKF) that induces the lysis of other B.subtilis cells that have not entered the sporulation pathway, providing a source of nutrients to support sporulation, and at the same time delaying commitment to the energetically expensive and irreversible onset of sporulation. Can also inhibit growth of other bacteria at high concentrations. Addition of SKF to solid cultures induces killing, but it is much less effective than SDP (AC O34344). Has a role in protecting the secreted lipase LipA against proteolysis, either by modulating its folding or by acting as a protease inhibitor. The sequence is that of Sporulation killing factor from Bacillus subtilis (strain 168).